A 103-amino-acid chain; its full sequence is Large ribosomal subunit protein eL14 (103 aa).

Belongs to the eukaryotic ribosomal protein eL14 family.

This is Large ribosomal subunit protein eL14 from Pyrobaculum aerophilum (strain ATCC 51768 / DSM 7523 / JCM 9630 / CIP 104966 / NBRC 100827 / IM2).